The chain runs to 136 residues: Small ribosomal subunit protein eS8 (136 aa).

Residues 1-23 (MGVYHGNDLKKPTGGKKRPHQKV) form a disordered region. Over residues 13-23 (TGGKKRPHQKV) the composition is skewed to basic residues.

Belongs to the eukaryotic ribosomal protein eS8 family. In terms of assembly, part of the 30S ribosomal subunit.

This Hyperthermus butylicus (strain DSM 5456 / JCM 9403 / PLM1-5) protein is Small ribosomal subunit protein eS8.